The primary structure comprises 164 residues: Thiol peroxidase (164 aa).

One can recognise a Thioredoxin domain in the interval 16–162; the sequence is LQVGDIAKDF…YEAAINAAKI (147 aa). Cysteine 58 serves as the catalytic Cysteine sulfenic acid (-SOH) intermediate. Cysteine 58 and cysteine 92 are joined by a disulfide.

Belongs to the peroxiredoxin family. Tpx subfamily. Homodimer.

The enzyme catalyses a hydroperoxide + [thioredoxin]-dithiol = an alcohol + [thioredoxin]-disulfide + H2O. Thiol-specific peroxidase that catalyzes the reduction of hydrogen peroxide and organic hydroperoxides to water and alcohols, respectively. Plays a role in cell protection against oxidative stress by detoxifying peroxides. This chain is Thiol peroxidase, found in Streptococcus agalactiae serotype V (strain ATCC BAA-611 / 2603 V/R).